The sequence spans 342 residues: S-adenosylmethionine:tRNA ribosyltransferase-isomerase (342 aa).

It belongs to the QueA family. As to quaternary structure, monomer.

The protein resides in the cytoplasm. The catalysed reaction is 7-aminomethyl-7-carbaguanosine(34) in tRNA + S-adenosyl-L-methionine = epoxyqueuosine(34) in tRNA + adenine + L-methionine + 2 H(+). It participates in tRNA modification; tRNA-queuosine biosynthesis. In terms of biological role, transfers and isomerizes the ribose moiety from AdoMet to the 7-aminomethyl group of 7-deazaguanine (preQ1-tRNA) to give epoxyqueuosine (oQ-tRNA). In Streptococcus pneumoniae serotype 19F (strain G54), this protein is S-adenosylmethionine:tRNA ribosyltransferase-isomerase.